A 123-amino-acid chain; its full sequence is Holo-[acyl-carrier-protein] synthase (123 aa).

The Mg(2+) site is built by aspartate 9 and glutamate 57.

The protein belongs to the P-Pant transferase superfamily. AcpS family. The cofactor is Mg(2+).

The protein resides in the cytoplasm. It catalyses the reaction apo-[ACP] + CoA = holo-[ACP] + adenosine 3',5'-bisphosphate + H(+). Functionally, transfers the 4'-phosphopantetheine moiety from coenzyme A to a Ser of acyl-carrier-protein. The sequence is that of Holo-[acyl-carrier-protein] synthase from Streptomyces avermitilis (strain ATCC 31267 / DSM 46492 / JCM 5070 / NBRC 14893 / NCIMB 12804 / NRRL 8165 / MA-4680).